A 263-amino-acid chain; its full sequence is GTP cyclohydrolase 1 type 2 homolog (263 aa).

Residues H76, H77, D113, H231, and E235 each contribute to the a divalent metal cation site.

This sequence belongs to the GTP cyclohydrolase I type 2/NIF3 family. As to quaternary structure, homohexamer.

In Deinococcus radiodurans (strain ATCC 13939 / DSM 20539 / JCM 16871 / CCUG 27074 / LMG 4051 / NBRC 15346 / NCIMB 9279 / VKM B-1422 / R1), this protein is GTP cyclohydrolase 1 type 2 homolog.